Consider the following 236-residue polypeptide: 2,3,4,5-tetrahydropyridine-2,6-dicarboxylate N-acetyltransferase (236 aa).

This sequence belongs to the transferase hexapeptide repeat family. DapH subfamily.

It carries out the reaction (S)-2,3,4,5-tetrahydrodipicolinate + acetyl-CoA + H2O = L-2-acetamido-6-oxoheptanedioate + CoA. The protein operates within amino-acid biosynthesis; L-lysine biosynthesis via DAP pathway; LL-2,6-diaminopimelate from (S)-tetrahydrodipicolinate (acetylase route): step 1/3. Functionally, catalyzes the transfer of an acetyl group from acetyl-CoA to tetrahydrodipicolinate. The sequence is that of 2,3,4,5-tetrahydropyridine-2,6-dicarboxylate N-acetyltransferase from Lactobacillus acidophilus (strain ATCC 700396 / NCK56 / N2 / NCFM).